A 404-amino-acid polypeptide reads, in one-letter code: Argininosuccinate synthase (404 aa).

Residues alanine 10–serine 18 and alanine 37 contribute to the ATP site. Residues tyrosine 88 and serine 93 each coordinate L-citrulline. Residue glycine 118 participates in ATP binding. L-aspartate contacts are provided by threonine 120, asparagine 124, and aspartate 125. Asparagine 124 contributes to the L-citrulline binding site. L-citrulline contacts are provided by arginine 128, serine 179, serine 188, glutamate 264, and tyrosine 276.

Belongs to the argininosuccinate synthase family. Type 1 subfamily. In terms of assembly, homotetramer.

The protein localises to the cytoplasm. It carries out the reaction L-citrulline + L-aspartate + ATP = 2-(N(omega)-L-arginino)succinate + AMP + diphosphate + H(+). It functions in the pathway amino-acid biosynthesis; L-arginine biosynthesis; L-arginine from L-ornithine and carbamoyl phosphate: step 2/3. This Nitrosomonas eutropha (strain DSM 101675 / C91 / Nm57) protein is Argininosuccinate synthase.